The sequence spans 210 residues: uncharacterized protein (210 aa).

Over residues 101 to 114 (QELPEPSSPQSQSS) the composition is skewed to low complexity. The segment at 101 to 166 (QELPEPSSPQ…SSGVSSDLQK (66 aa)) is disordered. The segment covering 147–164 (RSTSPVTASTSSGVSSDL) has biased composition (polar residues).

This is an uncharacterized protein from Alcelaphine herpesvirus 1 (strain C500) (AlHV-1).